The primary structure comprises 96 residues: Co-chaperonin GroES (96 aa).

Belongs to the GroES chaperonin family. As to quaternary structure, heptamer of 7 subunits arranged in a ring. Interacts with the chaperonin GroEL.

It localises to the cytoplasm. Together with the chaperonin GroEL, plays an essential role in assisting protein folding. The GroEL-GroES system forms a nano-cage that allows encapsulation of the non-native substrate proteins and provides a physical environment optimized to promote and accelerate protein folding. GroES binds to the apical surface of the GroEL ring, thereby capping the opening of the GroEL channel. The polypeptide is Co-chaperonin GroES (Geobacter sp. (strain M21)).